Consider the following 404-residue polypeptide: Probable eukaryotic initiation factor 4A (404 aa).

The disordered stretch occupies residues 1–28; the sequence is MAQQGKVEPQDQDSFLDDQPGIRPIPSF. The Q motif motif lies at 26 to 54; sequence PSFDDMPLHQNLLRGIYSHGFEKPSSIQQ. One can recognise a Helicase ATP-binding domain in the interval 57–231; sequence IVPFTRGGDI…KKFMRDPTRI (175 aa). An ATP-binding site is contributed by 70-77; that stretch reads AQSGTGKT. The DEAD box signature appears at 179-182; the sequence is DEAD. In terms of domain architecture, Helicase C-terminal spans 242 to 402; the sequence is GIKQFFIAVE…ELPVDFAAYL (161 aa).

Belongs to the DEAD box helicase family. eIF4A subfamily. As to quaternary structure, eIF4F is a multi-subunit complex, the composition of which varies with external and internal environmental conditions. It is composed of at least EIF4A, EIF4E and EIF4G.

The catalysed reaction is ATP + H2O = ADP + phosphate + H(+). Its function is as follows. ATP-dependent RNA helicase which is a subunit of the eIF4F complex involved in cap recognition and is required for mRNA binding to ribosome. In the current model of translation initiation, eIF4A unwinds RNA secondary structures in the 5'-UTR of mRNAs which is necessary to allow efficient binding of the small ribosomal subunit, and subsequent scanning for the initiator codon. This chain is Probable eukaryotic initiation factor 4A, found in Trypanosoma brucei brucei (strain 927/4 GUTat10.1).